Here is a 1986-residue protein sequence, read N- to C-terminus: Protein Shroom3 (1986 aa).

The interval 1–21 is disordered; sequence MKTPENLEEPSATPNPSRTPT. In terms of domain architecture, PDZ spans 24–109; the sequence is FVYLEALLEG…TLRLVVRRDV (86 aa). 5 disordered regions span residues 152 to 199, 211 to 239, 265 to 285, 342 to 463, and 564 to 1055; these read CSEP…SSTS, RSPD…LLSP, TSSS…RSGS, QGCA…QPLL, and NEDS…RRIF. At serine 212 the chain carries Phosphoserine. Polar residues-rich tracts occupy residues 357-376 and 415-425; these read PSPS…TDNL and PQTNSSGSQKT. Residues 430–440 are compositionally biased toward basic and acidic residues; the sequence is DQLHTVPERSP. A phosphoserine mark is found at serine 439 and serine 443. Residues 595 to 607 show a composition bias toward polar residues; sequence ACSNHHSLSSPQA. Basic and acidic residues predominate over residues 630-645; the sequence is QEDHNANLRQKVEREG. Polar residues predominate over residues 653–677; it reads NSGRTRSAFSSLQNIPESLRRQSNV. Low complexity predominate over residues 747–761; that stretch reads SGASQRRLSSSSSAA. Basic and acidic residues predominate over residues 774–785; the sequence is KVSRIEEREQGR. Low complexity-rich tracts occupy residues 796–814 and 865–874; these read YGPG…TSSS and DGRGPPARGG. Serine 888 carries the phosphoserine modification. A compositionally biased stretch (basic and acidic residues) spans 895 to 908; that stretch reads EAEREASWSEDRPG. Threonine 909 carries the post-translational modification Phosphothreonine. Phosphoserine occurs at positions 912 and 969. In terms of domain architecture, ASD1 spans 927-1023; that stretch reads IKDAQSRVLG…SEPEKMNEVG (97 aa). Basic and acidic residues predominate over residues 1004-1020; the sequence is LTVEQKKRSYSEPEKMN. 2 positions are modified to phosphoserine: serine 1063 and serine 1066. Disordered regions lie at residues 1083–1102, 1107–1223, 1304–1425, and 1446–1654; these read YIQR…PEAG, AQSA…AEDL, ATVA…PPWV, and ANLK…KTSE. Residues 1114 to 1127 are compositionally biased toward low complexity; the sequence is AGPAAPDGPGLASA. Residues 1134-1146 show a composition bias toward basic and acidic residues; it reads REPEALPRKEHTH. A phosphoserine mark is found at tryptophan 1175, valine 1179, and serine 1219. Positions 1307–1318 are enriched in low complexity; that stretch reads ASSAPPESSGAA. 2 positions are modified to phosphoserine: serine 1350 and serine 1354. The span at 1366-1399 shows a compositional bias: polar residues; that stretch reads YRSQLAMDQQTGQQPPSSPASAVTQPTSPRSPEL. Residues 1455–1469 show a composition bias toward low complexity; it reads PSRPSSCSTSDPDTP. Residues 1513-1524 show a composition bias toward pro residues; that stretch reads LPPPPPPSPPSE. The span at 1581–1630 shows a compositional bias: polar residues; it reads EGSQIMTATPPQTSAKGSEAESNTPSSASAQPQLNGSPGKQLCPSQTRNL. A compositionally biased stretch (basic and acidic residues) spans 1634–1654; it reads PVERTQDLGKKTHAEPQKTSE. The 289-residue stretch at 1659–1947 folds into the ASD2 domain; sequence EALAKEIVHQ…QVRCLLESLP (289 aa). Residues 1844–1890 are a coiled coil; the sequence is RLARVENVLRGLGEDASKEERSSLNEKRKVLAGQHEDARELKENLDR.

The protein belongs to the shroom family. As to quaternary structure, interacts with F-actin. Interacts with ROCK1.

The protein resides in the cell junction. The protein localises to the adherens junction. It localises to the cytoplasm. Its subcellular location is the cytoskeleton. It is found in the apical cell membrane. Controls cell shape changes in the neuroepithelium during neural tube closure. Induces apical constriction in epithelial cells by promoting the apical accumulation of F-actin and myosin II, and probably by bundling stress fibers. Induces apicobasal cell elongation by redistributing gamma-tubulin and directing the assembly of robust apicobasal microtubule arrays. This chain is Protein Shroom3 (Shroom3), found in Mus musculus (Mouse).